We begin with the raw amino-acid sequence, 471 residues long: GTPase Der (471 aa).

2 EngA-type G domains span residues proline 3 to serine 168 and valine 178 to alanine 353. Residues glycine 9–serine 16, aspartate 56–isoleucine 60, asparagine 120–glutamate 123, glycine 184–serine 191, aspartate 231–methionine 235, and asparagine 296–aspartate 299 contribute to the GTP site. The KH-like domain maps to arginine 354–glutamate 438.

Belongs to the TRAFAC class TrmE-Era-EngA-EngB-Septin-like GTPase superfamily. EngA (Der) GTPase family. Associates with the 50S ribosomal subunit.

GTPase that plays an essential role in the late steps of ribosome biogenesis. This chain is GTPase Der, found in Symbiobacterium thermophilum (strain DSM 24528 / JCM 14929 / IAM 14863 / T).